We begin with the raw amino-acid sequence, 493 residues long: L-arabinose isomerase 1 (493 aa).

Mn(2+) contacts are provided by glutamate 301, glutamate 326, histidine 343, and histidine 442.

It belongs to the arabinose isomerase family. Mn(2+) serves as cofactor.

The enzyme catalyses beta-L-arabinopyranose = L-ribulose. It functions in the pathway carbohydrate degradation; L-arabinose degradation via L-ribulose; D-xylulose 5-phosphate from L-arabinose (bacterial route): step 1/3. Functionally, catalyzes the conversion of L-arabinose to L-ribulose. The sequence is that of L-arabinose isomerase 1 from Bacillus licheniformis (strain ATCC 14580 / DSM 13 / JCM 2505 / CCUG 7422 / NBRC 12200 / NCIMB 9375 / NCTC 10341 / NRRL NRS-1264 / Gibson 46).